Reading from the N-terminus, the 20-residue chain is Phosphoglycerate kinase (20 aa).

The disordered stretch occupies residues 1-20 (MNKKSIRNVNLKGKRVFDRV).

This sequence belongs to the phosphoglycerate kinase family. Monomer.

The protein localises to the cytoplasm. The catalysed reaction is (2R)-3-phosphoglycerate + ATP = (2R)-3-phospho-glyceroyl phosphate + ADP. It participates in carbohydrate degradation; glycolysis; pyruvate from D-glyceraldehyde 3-phosphate: step 2/5. The chain is Phosphoglycerate kinase from Bacillus cereus.